Here is a 440-residue protein sequence, read N- to C-terminus: MASFVPTKQFVGASSSSDIGSSRLVSLQLPSKFSSSNFHLPSRPSQLKRLEIQAAGSTFGNYFRVTTFGESHGGGVGCIIDGCPPRLPLSESDMQVELDRRRPGQSRITTPRKETDTCKISSGTADGLTTGSPIKVEVPNTDQRGNDYSEMSLAYRPSHADATYDFKYGVRSVQGGGRSSARETIGRVAAGAVAKKILKLYSGAEVLAYVSQVHQVVLPEDLIDHQNVTLEQIESNIVRCPDPEYAEKMIAAIDAVRVRGDSVGGVVTCIVRNLPRGLGTPVFDKLEAELAKACMSLPATKGFEFGSGFAGTFMTGSEHNDEFYMDEHGRIRTRTNRSGGIQGGISNGEVINMRIGFKPTSTISRKQQTVTRDKHETELIARGRHDPCVVPRAVPMVEAMVALVLVDQLMAQYSQCMMFPINPELQEPLQSSPESAEVTL.

Residues 1 to 54 constitute a chloroplast transit peptide; that stretch reads MASFVPTKQFVGASSSSDIGSSRLVSLQLPSKFSSSNFHLPSRPSQLKRLEIQA. Residues 100-147 form a disordered region; that stretch reads RRRPGQSRITTPRKETDTCKISSGTADGLTTGSPIKVEVPNTDQRGND. A compositionally biased stretch (polar residues) spans 118 to 132; it reads CKISSGTADGLTTGS.

This sequence belongs to the chorismate synthase family. Homotetramer. FMNH2 serves as cofactor. In terms of tissue distribution, predominantly expressed in flowers and roots and, to a lesser extent, in stems, leaves, and cotyledons.

It localises to the plastid. The protein localises to the chloroplast. It carries out the reaction 5-O-(1-carboxyvinyl)-3-phosphoshikimate = chorismate + phosphate. The protein operates within metabolic intermediate biosynthesis; chorismate biosynthesis; chorismate from D-erythrose 4-phosphate and phosphoenolpyruvate: step 7/7. Functionally, catalyzes the last common step of the biosynthesis of aromatic amino acids, produced via the shikimic acid pathway. This chain is Chorismate synthase 1, chloroplastic (CS1), found in Solanum lycopersicum (Tomato).